The primary structure comprises 55 residues: Large ribosomal subunit protein bL33 (55 aa).

It belongs to the bacterial ribosomal protein bL33 family.

In Kocuria rhizophila (strain ATCC 9341 / DSM 348 / NBRC 103217 / DC2201), this protein is Large ribosomal subunit protein bL33.